The primary structure comprises 862 residues: Leucine--tRNA ligase (862 aa).

Residues 51 to 61 carry the 'HIGH' region motif; sequence PYPSGSLHMGH. The 'KMSKS' region motif lies at 624-628; the sequence is KMSKS. Lys-627 contributes to the ATP binding site.

This sequence belongs to the class-I aminoacyl-tRNA synthetase family.

The protein resides in the cytoplasm. The enzyme catalyses tRNA(Leu) + L-leucine + ATP = L-leucyl-tRNA(Leu) + AMP + diphosphate. The chain is Leucine--tRNA ligase from Prochlorococcus marinus (strain NATL2A).